The chain runs to 328 residues: GTP 3',8-cyclase (328 aa).

The region spanning 1–229 is the Radical SAM core domain; the sequence is MNQVDYLRIS…DAQVRGAGPA (229 aa). Arginine 8 lines the GTP pocket. [4Fe-4S] cluster-binding residues include cysteine 15 and cysteine 19. Tyrosine 21 contributes to the S-adenosyl-L-methionine binding site. [4Fe-4S] cluster is bound at residue cysteine 22. Arginine 60 serves as a coordination point for GTP. Position 64 (glycine 64) interacts with S-adenosyl-L-methionine. Position 91 (threonine 91) interacts with GTP. Residue serine 115 participates in S-adenosyl-L-methionine binding. Position 155 (lysine 155) interacts with GTP. Methionine 189 serves as a coordination point for S-adenosyl-L-methionine. The [4Fe-4S] cluster site is built by cysteine 252 and cysteine 255. 257–259 contributes to the GTP binding site; it reads RMR. Residue cysteine 269 participates in [4Fe-4S] cluster binding.

The protein belongs to the radical SAM superfamily. MoaA family. In terms of assembly, monomer and homodimer. The cofactor is [4Fe-4S] cluster.

It carries out the reaction GTP + AH2 + S-adenosyl-L-methionine = (8S)-3',8-cyclo-7,8-dihydroguanosine 5'-triphosphate + 5'-deoxyadenosine + L-methionine + A + H(+). It functions in the pathway cofactor biosynthesis; molybdopterin biosynthesis. Catalyzes the cyclization of GTP to (8S)-3',8-cyclo-7,8-dihydroguanosine 5'-triphosphate. The polypeptide is GTP 3',8-cyclase (Nostoc sp. (strain PCC 7120 / SAG 25.82 / UTEX 2576)).